The sequence spans 193 residues: MKNSSIVLASASPRRSELLESAGIQFRVVPADINEEPFPGEEPVDHVQRLAEGKARAAAELAEGRFFLGADTIVLCDGEIMGKPKDAADAKRMLNKLSGVPHEVVTGFAIYDRERKGAVVEAIRTKVFFKKLRDEEILDYIATGCPFDKAGAYAIQGGAAHMVQKIEGSYTNVVGLPLCEVVDALRVIGALGN.

Asp71 (proton acceptor) is an active-site residue.

It belongs to the Maf family. YhdE subfamily. The cofactor is a divalent metal cation.

The protein resides in the cytoplasm. It catalyses the reaction dTTP + H2O = dTMP + diphosphate + H(+). The catalysed reaction is UTP + H2O = UMP + diphosphate + H(+). Functionally, nucleoside triphosphate pyrophosphatase that hydrolyzes dTTP and UTP. May have a dual role in cell division arrest and in preventing the incorporation of modified nucleotides into cellular nucleic acids. The protein is dTTP/UTP pyrophosphatase of Citrifermentans bemidjiense (strain ATCC BAA-1014 / DSM 16622 / JCM 12645 / Bem) (Geobacter bemidjiensis).